Here is a 72-residue protein sequence, read N- to C-terminus: Protein kish-A (72 aa).

The N-terminal stretch at 1–26 is a signal peptide; the sequence is MSAIFNFQSLLTVILLLICTCAYIRS. The Extracellular segment spans residues 27 to 53; it reads LTPSLLDKNKTGFLGIFWKCARIGERK. An N-linked (GlcNAc...) asparagine glycan is attached at asparagine 35. Residues 54-71 traverse the membrane as a helical segment; the sequence is SPYVAFCCIVMALTILFS. A topological domain (cytoplasmic) is located at residue glutamate 72.

The protein belongs to the KISH family.

The protein resides in the golgi apparatus membrane. Involved in the early part of the secretory pathway. The polypeptide is Protein kish-A (tmem167a) (Danio rerio (Zebrafish)).